The primary structure comprises 497 residues: Iron-sulfur cluster assembly factor IBA57, mitochondrial (497 aa).

The transit peptide at 1-27 (MFISRRCRIKGFTLKNLLWFRSSSTRF) directs the protein to the mitochondrion. The interval 414–433 (PTLNPFTNKPPERTKRKQRP) is disordered.

It belongs to the GcvT family. CAF17/IBA57 subfamily. Interacts with CCR4, ISA1 and ISA2.

The protein localises to the mitochondrion matrix. Its function is as follows. Required for lysine and glutamate prototrophy and mitochondrial genome maintenance. Has a role in the maturation of mitochondrial aconitase-type and radical-SAM Fe/S proteins biotin synthase and lipoic acid synthase. In Saccharomyces cerevisiae (strain ATCC 204508 / S288c) (Baker's yeast), this protein is Iron-sulfur cluster assembly factor IBA57, mitochondrial.